A 492-amino-acid chain; its full sequence is Protein PAIR1 (492 aa).

The stretch at Val166–Asp186 forms a coiled coil. The Nuclear localization signal signature appears at Lys479–Arg483.

Interacts with CRC1. Expressed in reproductive organs, but not in vegetative organs.

Its subcellular location is the nucleus. In terms of biological role, involved in spore formation. Plays an essential role in the establishment of homologous chromosome pairing in early meiosis. This is Protein PAIR1 (PAIR1) from Oryza sativa subsp. japonica (Rice).